A 367-amino-acid polypeptide reads, in one-letter code: Epoxide hydrolase 3 (367 aa).

A helical transmembrane segment spans residues 21-41; sequence GVFFWVLVYVAALLAAVSYIP. The active-site Nucleophile is Asp-173. Tyr-285 (proton donor) is an active-site residue. The active-site Proton acceptor is the His-340.

This sequence belongs to the AB hydrolase superfamily. Epoxide hydrolase family.

It localises to the microsome membrane. The enzyme catalyses an epoxide + H2O = an ethanediol. It carries out the reaction 9,10-epoxyoctadecanoate + H2O = 9,10-dihydroxyoctadecanoate. It catalyses the reaction 9,10-epoxy-(12Z)-octadecenoate + H2O = 9,10-dihydroxy-(12Z)-octadecenoate. The catalysed reaction is 8,9-epoxy-(5Z,11Z,14Z)-eicosatrienoate + H2O = 8,9-dihydroxy-(5Z,11Z,14Z)-eicosatrienoate. The enzyme catalyses 11,12-epoxy-(5Z,8Z,14Z)-eicosatrienoate + H2O = 11,12-dihydroxy-(5Z,8Z,14Z)-eicosatrienoate. It carries out the reaction 14,15-epoxy-(5Z,8Z,11Z)-eicosatrienoate + H2O = 14,15-dihydroxy-(5Z,8Z,11Z)-eicosatrienoate. Inhibited by 1-(1-acetylpiperidin-4-yl)-3-(4-(trifl uoromethoxy)phenyl)urea (TPAU), 1-cyclohexyl-3-dodecylurea (CDU), 12-(3-adamantan-1-yl-ureido)-dodecanoic acid (AUDA), 1-((3S, 5S, 7S)-adamantan-1-yl)-3-(5-(2-(2-ethoxyethoxy) ethoxy)pentyl)urea (AEPU) and to a lesser extent by 8-(3-((3S, 5S, 7S)-adamantan-1-yl)ureido) octanoic acid (AUOA). In terms of biological role, catalyzes the hydrolysis of epoxide-containing fatty acids. Active in vitro against epoxyeicosatrienoic acids (EETs) including 8,9-EET, 9,10-EET, 11,12-EET and 14,15-EET and leukotoxin. In Xenopus tropicalis (Western clawed frog), this protein is Epoxide hydrolase 3 (ephx3).